A 132-amino-acid chain; its full sequence is Small ribosomal subunit protein uS11c (132 aa).

Belongs to the universal ribosomal protein uS11 family. Part of the 30S ribosomal subunit.

The protein resides in the plastid. It is found in the chloroplast. The protein is Small ribosomal subunit protein uS11c of Gnetum parvifolium (Small-leaved jointfir).